The chain runs to 386 residues: Probable pectin lyase F (386 aa).

Positions 1–16 are cleaved as a signal peptide; that stretch reads MKTAVLSLLLALQAYA. Cys77 and Cys101 are disulfide-bonded. The N-linked (GlcNAc...) asparagine glycan is linked to Asn124. Residue Arg251 is part of the active site. An intrachain disulfide couples Cys326 to Cys334.

It belongs to the polysaccharide lyase 1 family.

Its subcellular location is the secreted. The enzyme catalyses Eliminative cleavage of (1-&gt;4)-alpha-D-galacturonan methyl ester to give oligosaccharides with 4-deoxy-6-O-methyl-alpha-D-galact-4-enuronosyl groups at their non-reducing ends.. Its function is as follows. Pectinolytic enzymes consist of four classes of enzymes: pectin lyase, polygalacturonase, pectin methylesterase and rhamnogalacturonase. Among pectinolytic enzymes, pectin lyase is the most important in depolymerization of pectin, since it cleaves internal glycosidic bonds of highly methylated pectins. This chain is Probable pectin lyase F (pelF), found in Neosartorya fischeri (strain ATCC 1020 / DSM 3700 / CBS 544.65 / FGSC A1164 / JCM 1740 / NRRL 181 / WB 181) (Aspergillus fischerianus).